The following is a 632-amino-acid chain: Chaperone protein DnaK (632 aa).

At threonine 198 the chain carries Phosphothreonine; by autocatalysis. Residues 599–632 are disordered; that stretch reads YKKAGASQQGAGSTTQSKKEEDVIEAEVEDKDNK. Positions 604–614 are enriched in polar residues; it reads ASQQGAGSTTQ. The span at 620-632 shows a compositional bias: acidic residues; the sequence is DVIEAEVEDKDNK.

The protein belongs to the heat shock protein 70 family.

Functionally, acts as a chaperone. This is Chaperone protein DnaK from Thermodesulfovibrio yellowstonii (strain ATCC 51303 / DSM 11347 / YP87).